The primary structure comprises 371 residues: 4-hydroxy-3-methylbut-2-en-1-yl diphosphate synthase (flavodoxin) (371 aa).

The [4Fe-4S] cluster site is built by C270, C273, C305, and E312.

It belongs to the IspG family. [4Fe-4S] cluster serves as cofactor.

It catalyses the reaction (2E)-4-hydroxy-3-methylbut-2-enyl diphosphate + oxidized [flavodoxin] + H2O + 2 H(+) = 2-C-methyl-D-erythritol 2,4-cyclic diphosphate + reduced [flavodoxin]. It participates in isoprenoid biosynthesis; isopentenyl diphosphate biosynthesis via DXP pathway; isopentenyl diphosphate from 1-deoxy-D-xylulose 5-phosphate: step 5/6. Converts 2C-methyl-D-erythritol 2,4-cyclodiphosphate (ME-2,4cPP) into 1-hydroxy-2-methyl-2-(E)-butenyl 4-diphosphate. The polypeptide is 4-hydroxy-3-methylbut-2-en-1-yl diphosphate synthase (flavodoxin) (Shewanella halifaxensis (strain HAW-EB4)).